The following is a 406-amino-acid chain: RILP-like protein 1 (406 aa).

A Phosphoserine modification is found at S7. The 88-residue stretch at 10-97 folds into the RH1 domain; that stretch reads AALSALEKNV…RVERMDRIEK (88 aa). Position 47 is an S-nitrosocysteine (C47). The stretch at 76–258 forms a coiled coil; the sequence is ELDELRLELD…KLRERLQGEH (183 aa). Disordered regions lie at residues 255 to 280 and 330 to 354; these read QGEH…ESIS and EIEE…QPES. Phosphoserine is present on S259. Over residues 262–280 the composition is skewed to acidic residues; it reads GEEEEAEIQPQPDGEESIS. The 66-residue stretch at 294-359 folds into the RH2 domain; it reads RPRFTLQELR…PQPESGIKRL (66 aa).

The protein belongs to the RILPL family. In terms of assembly, interacts (when S-nitrosylated) with GAPDH. Interacts with RAB8A; interaction is dependent on the phosphorylation of 'Thr-72' of RAB8A. Interacts with RAB10 and RAB12; the interaction is dependent on the phosphorylation of 'Thr-73' of RAB10, and 'Ser-105' of RAB12. Post-translationally, S-nitrosylation is required for the interaction with GAPDH.

The protein resides in the cytoplasm. It is found in the cytosol. The protein localises to the cell projection. It localises to the cilium. Its subcellular location is the cytoskeleton. The protein resides in the microtubule organizing center. It is found in the centrosome. The protein localises to the centriole. Its function is as follows. Neuroprotective protein, which acts by sequestring GAPDH in the cytosol and prevent the apoptotic function of GAPDH in the nucleus. Competes with SIAH1 for binding GAPDH. Does not regulate lysosomal morphology and distribution. Plays a role in the regulation of cell shape and polarity. Plays a role in cellular protein transport, including protein transport away from primary cilia. Binds to RAB10 following LRRK2-mediated RAB10 phosphorylation which leads to inhibition of ciliogenesis. The protein is RILP-like protein 1 (Rilpl1) of Mus musculus (Mouse).